A 390-amino-acid polypeptide reads, in one-letter code: Chorismate synthase (390 aa).

The NADP(+) site is built by arginine 39 and arginine 45. Residues 132 to 134, 253 to 254, glycine 298, 313 to 317, and arginine 339 each bind FMN; these read RSS, NA, and KPIPT.

This sequence belongs to the chorismate synthase family. Homotetramer. It depends on FMNH2 as a cofactor.

The enzyme catalyses 5-O-(1-carboxyvinyl)-3-phosphoshikimate = chorismate + phosphate. It functions in the pathway metabolic intermediate biosynthesis; chorismate biosynthesis; chorismate from D-erythrose 4-phosphate and phosphoenolpyruvate: step 7/7. Its function is as follows. Catalyzes the anti-1,4-elimination of the C-3 phosphate and the C-6 proR hydrogen from 5-enolpyruvylshikimate-3-phosphate (EPSP) to yield chorismate, which is the branch point compound that serves as the starting substrate for the three terminal pathways of aromatic amino acid biosynthesis. This reaction introduces a second double bond into the aromatic ring system. The chain is Chorismate synthase from Bacillus subtilis (strain 168).